The following is a 152-amino-acid chain: Maintenance of carboxysome distribution protein B (152 aa).

As to quaternary structure, self-associates, interacts with McdA probably via the C-terminus of both proteins. Homohexamerizes. Probably a trimer of dimers. Interacts with most of the shell components of the carboxysome (CcmK2, CcmK3, CcmK4, CcmL and CcmO, but not CcmP) via its C-terminus.

It localises to the carboxysome. In terms of biological role, mcdA and McdB together mediate carboxysome (Cb) spacing, size, ultrastructure and probably inheritance in the cell. Together they prevent Cb aggregation. McdA is an ATPase that forms dynamic gradients on the nucleoid in response to adapter protein McdB, which associates with carboxysomes. The interplay between McdA gradients on the nucleoid and McdB-bound carboxysomes result in the equal spacing of Cbs along the cell length. McdB may have an additional function in cell divison. Stimulates the ATPase activity of McdA, causing McdA to be released from DNA. Overexpression leads to loss of McdA oscillation and formation of large Cb aggregates which colocalize with McdB, as well as diffuse McdB staining in the cytoplasm. Undergoes liquid-liquid phase separation between pH 6.5-7.5 and at concentrations between 1 uM and 167 uM. Forms polar foci upon overexpression in E.coli. Its function is as follows. Incorrect positioning (aggregation) of carboxysomes results in reduced CO(2) fixation by encapsulated RuBisCO, which leads to slower growth, cell elongation, asymmetric cell division and an increase in RuBisCO levels. This Synechococcus elongatus (strain ATCC 33912 / PCC 7942 / FACHB-805) (Anacystis nidulans R2) protein is Maintenance of carboxysome distribution protein B.